The chain runs to 286 residues: Dolichyl-diphosphooligosaccharide--protein glycosyltransferase subunit SWP1 (286 aa).

The N-terminal stretch at 1-19 (MQFFKTLAALVSCISFVLA) is a signal peptide. Over 20–194 (YVAQDVHVSF…HAEPKRVAKP (175 aa)) the chain is Lumenal. Residues 195-215 (IAVIFVLIIFITILSLIVTWL) traverse the membrane as a helical segment. Over 216-228 (NSCAAAFNNIPTG) the chain is Cytoplasmic. The chain crosses the membrane as a helical span at residues 229–249 (VTAVYFLGFIATIVGFEVIFA). Residues 250-252 (RYY) lie on the Lumenal side of the membrane. Residues 253 to 273 (LGTSIFETLFSSLYLGAPGLL) form a helical membrane-spanning segment. The Cytoplasmic portion of the chain corresponds to 274-286 (TSTKFLRSFGQTI).

Belongs to the SWP1 family. Component of the oligosaccharyltransferase (OST) complex, which appears to exist in two assemblies comprising OST1, OST2, OST4, OST5, STT3, SWP1, WPB1, and either OST3 or OST6. OST assembly occurs through the formation of 3 subcomplexes. Subcomplex 1 contains OST1 and OST5, subcomplex 2 contains STT3, OST3, and OST4, and subcomplex 3 contains OST2, WBP1, and SWP1. Interacts with SEC61 and SSS1.

The protein localises to the endoplasmic reticulum membrane. Its pathway is protein modification; protein glycosylation. In terms of biological role, subunit of the oligosaccharyl transferase (OST) complex that catalyzes the initial transfer of a defined glycan (Glc(3)Man(9)GlcNAc(2) in eukaryotes) from the lipid carrier dolichol-pyrophosphate to an asparagine residue within an Asn-X-Ser/Thr consensus motif in nascent polypeptide chains, the first step in protein N-glycosylation. N-glycosylation occurs cotranslationally and the complex associates with the Sec61 complex at the channel-forming translocon complex that mediates protein translocation across the endoplasmic reticulum (ER). All subunits are required for a maximal enzyme activity. In Saccharomyces cerevisiae (strain ATCC 204508 / S288c) (Baker's yeast), this protein is Dolichyl-diphosphooligosaccharide--protein glycosyltransferase subunit SWP1 (SWP1).